The chain runs to 269 residues: Protein NETWORKED 3A (269 aa).

Positions 6 to 87 constitute an NAB domain; the sequence is SKWWWIGNHN…ERYDLLRPSS (82 aa). Residues 87-113 are disordered; sequence SVHKHGSDSESHEKSSTCDESSWSEAC. Residues 91 to 103 show a composition bias toward basic and acidic residues; that stretch reads HGSDSESHEKSST. The stretch at 155–214 forms a coiled coil; the sequence is NGNSEMMKIEIERLREENKVYSEMVREKDEEKREAIRQMSVAIQMLKEENSELKKRVTNT.

Belongs to the NET family.

It localises to the cytoplasm. The protein resides in the cytoskeleton. The protein localises to the nucleus membrane. Functionally, plant-specific actin binding protein. May be part of a membrane-cytoskeletal adapter complex. This is Protein NETWORKED 3A from Arabidopsis thaliana (Mouse-ear cress).